Consider the following 506-residue polypeptide: Vinckepain-1 (506 aa).

The Cytoplasmic segment spans residues methionine 1–threonine 32. The propeptide at methionine 1 to aspartate 262 is activation peptide. The chain crosses the membrane as a helical; Signal-anchor for type II membrane protein span at residues isoleucine 33 to phenylalanine 53. Residues lysine 54–tyrosine 506 lie on the Lumenal side of the membrane. Residues asparagine 133 and asparagine 258 are each glycosylated (N-linked (GlcNAc...) asparagine). 4 cysteine pairs are disulfide-bonded: cysteine 284/cysteine 326, cysteine 319/cysteine 359, cysteine 344/cysteine 364, and cysteine 413/cysteine 495. Cysteine 287 is a catalytic residue. The N-linked (GlcNAc...) asparagine glycan is linked to asparagine 418. Residues histidine 419 and asparagine 470 contribute to the active site.

This sequence belongs to the peptidase C1 family.

The protein resides in the membrane. Its function is as follows. Cysteine protease. This is Vinckepain-1 from Plasmodium vinckei.